Reading from the N-terminus, the 284-residue chain is Putative ABC transporter ATP-binding protein MG468.1 homolog (284 aa).

The 232-residue stretch at 53-284 folds into the ABC transporter domain; that stretch reads VLFKGVCKAV…PKTINEINWV (232 aa). Residue 89–96 coordinates ATP; sequence GKSGSGKT.

It belongs to the ABC transporter superfamily.

The sequence is that of Putative ABC transporter ATP-binding protein MG468.1 homolog from Mycoplasma pneumoniae (strain ATCC 29342 / M129 / Subtype 1) (Mycoplasmoides pneumoniae).